A 153-amino-acid polypeptide reads, in one-letter code: Ubiquitin/ISG15-conjugating enzyme E2 L6 (153 aa).

Residues 2–149 enclose the UBC core domain; it reads MASMRVVKEL…AEEFTLRFGV (148 aa). C86 (glycyl thioester intermediate) is an active-site residue.

It belongs to the ubiquitin-conjugating enzyme family. As to quaternary structure, interacts with RNF19A, RNF19B and RNF144B. Interacts with FLT3 (tyrosine phosphorylated). In terms of processing, ISGylated. As to expression, present in natural killer cells (at protein level).

It carries out the reaction S-ubiquitinyl-[E1 ubiquitin-activating enzyme]-L-cysteine + [E2 ubiquitin-conjugating enzyme]-L-cysteine = [E1 ubiquitin-activating enzyme]-L-cysteine + S-ubiquitinyl-[E2 ubiquitin-conjugating enzyme]-L-cysteine.. It functions in the pathway protein modification; protein ubiquitination. In terms of biological role, catalyzes the covalent attachment of ubiquitin or ISG15 to other proteins. Functions in the E6/E6-AP-induced ubiquitination of p53/TP53. Promotes ubiquitination and subsequent proteasomal degradation of FLT3. The polypeptide is Ubiquitin/ISG15-conjugating enzyme E2 L6 (UBE2L6) (Homo sapiens (Human)).